The following is a 208-amino-acid chain: Casparian strip membrane protein 2 (208 aa).

The disordered stretch occupies residues 1-23 (MDSKSGRSESAINIPESNSTKHK). Residues 1–46 (MDSKSGRSESAINIPESNSTKHKSTVVHTATKVAAVAPRGGGWRRG) lie on the Cytoplasmic side of the membrane. Over residues 8–18 (SESAINIPESN) the composition is skewed to polar residues. The helical transmembrane segment at 47-67 (VSIFDFILRICALAAALAATA) threads the bilayer. Topologically, residues 68–96 (TMGTTDQTLPFFTQFFQFQASYDDLPAFT) are extracellular. The helical transmembrane segment at 97–117 (FFVVANGIASGYLVLSLPFSI) threads the bilayer. The Cytoplasmic segment spans residues 118-129 (ATIVRPHAAAIK). A helical membrane pass occupies residues 130–150 (LLLIIFDTVMVAFTAAAAAAA). Residues 151-184 (AAIVYLAHNGNSKTNWFAICQQFNDFCQRVSGAV) are Extracellular-facing. A helical transmembrane segment spans residues 185–205 (VASFVAAVILIFLVVLSAVAI). The Cytoplasmic segment spans residues 206–208 (RKH).

The protein belongs to the Casparian strip membrane proteins (CASP) family. Homodimer and heterodimers.

The protein localises to the cell membrane. Regulates membrane-cell wall junctions and localized cell wall deposition. Required for establishment of the Casparian strip membrane domain (CSD) and the subsequent formation of Casparian strips, a cell wall modification of the root endodermis that determines an apoplastic barrier between the intraorganismal apoplasm and the extraorganismal apoplasm and prevents lateral diffusion. The chain is Casparian strip membrane protein 2 from Triphysaria pusilla (Dwarf owl's-clover).